Here is a 304-residue protein sequence, read N- to C-terminus: Probable actin-related protein 2/3 complex subunit 2 (304 aa).

The protein belongs to the ARPC2 family. Component of the Arp2/3 complex.

The protein resides in the cytoplasm. It localises to the cytoskeleton. In terms of biological role, functions as actin-binding component of the Arp2/3 complex which is involved in regulation of actin polymerization and together with an activating nucleation-promoting factor (NPF) mediates the formation of branched actin networks. Seems to contact the mother actin filament. This Anopheles gambiae (African malaria mosquito) protein is Probable actin-related protein 2/3 complex subunit 2 (Arc-p34).